The sequence spans 127 residues: Fluoride-specific ion channel FluC (127 aa).

The next 4 helical transmembrane spans lie at 4-24, 35-55, 71-91, and 103-123; these read TLLA…QLGV, LGTL…LAFF, TGLC…IMFL, and VLLN…LVTW. Na(+) contacts are provided by G75 and T78.

It belongs to the fluoride channel Fluc/FEX (TC 1.A.43) family.

Its subcellular location is the cell inner membrane. It carries out the reaction fluoride(in) = fluoride(out). With respect to regulation, na(+) is not transported, but it plays an essential structural role and its presence is essential for fluoride channel function. Functionally, fluoride-specific ion channel. Important for reducing fluoride concentration in the cell, thus reducing its toxicity. This chain is Fluoride-specific ion channel FluC, found in Pectobacterium carotovorum subsp. carotovorum (strain PC1).